We begin with the raw amino-acid sequence, 783 residues long: Tricorn protease-interacting factor F2 (783 aa).

Substrate contacts are provided by residues glutamate 107 and 236–240 (GAMEN). Histidine 271 contacts Zn(2+). Glutamate 272 acts as the Proton acceptor in catalysis. Zn(2+) contacts are provided by histidine 275 and glutamate 294.

Belongs to the peptidase M1 family. In terms of assembly, monomer. Part of the Tricorn proteolytic complex. Requires Zn(2+) as cofactor.

It localises to the cytoplasm. Functionally, proteases F1, F2 and F3 degrade oligopeptides produced by Tricorn (themselves probably produced by the proteasome), yielding free amino acids. This chain is Tricorn protease-interacting factor F2 (trf2), found in Thermoplasma acidophilum (strain ATCC 25905 / DSM 1728 / JCM 9062 / NBRC 15155 / AMRC-C165).